Reading from the N-terminus, the 282-residue chain is Bifunctional protein FolD (282 aa).

Residues 160–162 (NRS), Ser-185, and Ile-228 contribute to the NADP(+) site.

It belongs to the tetrahydrofolate dehydrogenase/cyclohydrolase family. In terms of assembly, homodimer.

The catalysed reaction is (6R)-5,10-methylene-5,6,7,8-tetrahydrofolate + NADP(+) = (6R)-5,10-methenyltetrahydrofolate + NADPH. It carries out the reaction (6R)-5,10-methenyltetrahydrofolate + H2O = (6R)-10-formyltetrahydrofolate + H(+). The protein operates within one-carbon metabolism; tetrahydrofolate interconversion. Its function is as follows. Catalyzes the oxidation of 5,10-methylenetetrahydrofolate to 5,10-methenyltetrahydrofolate and then the hydrolysis of 5,10-methenyltetrahydrofolate to 10-formyltetrahydrofolate. In Cenarchaeum symbiosum (strain A), this protein is Bifunctional protein FolD.